Consider the following 470-residue polypeptide: Light-independent protochlorophyllide reductase subunit N (470 aa).

[4Fe-4S] cluster contacts are provided by C23, C48, and C108.

It belongs to the BchN/ChlN family. As to quaternary structure, protochlorophyllide reductase is composed of three subunits; ChlL, ChlN and ChlB. Forms a heterotetramer of two ChlB and two ChlN subunits. Requires [4Fe-4S] cluster as cofactor.

The protein resides in the plastid. Its subcellular location is the chloroplast. It catalyses the reaction chlorophyllide a + oxidized 2[4Fe-4S]-[ferredoxin] + 2 ADP + 2 phosphate = protochlorophyllide a + reduced 2[4Fe-4S]-[ferredoxin] + 2 ATP + 2 H2O. Its pathway is porphyrin-containing compound metabolism; chlorophyll biosynthesis (light-independent). In terms of biological role, component of the dark-operative protochlorophyllide reductase (DPOR) that uses Mg-ATP and reduced ferredoxin to reduce ring D of protochlorophyllide (Pchlide) to form chlorophyllide a (Chlide). This reaction is light-independent. The NB-protein (ChlN-ChlB) is the catalytic component of the complex. The chain is Light-independent protochlorophyllide reductase subunit N from Zygnema circumcarinatum (Green alga).